Here is a 376-residue protein sequence, read N- to C-terminus: Succinate--CoA ligase [ADP-forming] subunit beta (376 aa).

An ATP-grasp domain is found at 9–234; that stretch reads KAIAKKYGIP…ERELSELEKE (226 aa). Residues lysine 45, 52-54, glutamate 91, glutamate 94, and glutamate 99 each bind ATP; that span reads GRG. Positions 191 and 204 each coordinate Mg(2+). Residues asparagine 254 and 311–313 contribute to the substrate site; that span reads GIT.

This sequence belongs to the succinate/malate CoA ligase beta subunit family. Heterotetramer of two alpha and two beta subunits. Mg(2+) is required as a cofactor.

The enzyme catalyses succinate + ATP + CoA = succinyl-CoA + ADP + phosphate. The catalysed reaction is GTP + succinate + CoA = succinyl-CoA + GDP + phosphate. Its pathway is carbohydrate metabolism; tricarboxylic acid cycle; succinate from succinyl-CoA (ligase route): step 1/1. Its function is as follows. Succinyl-CoA synthetase functions in the citric acid cycle (TCA), coupling the hydrolysis of succinyl-CoA to the synthesis of either ATP or GTP and thus represents the only step of substrate-level phosphorylation in the TCA. The beta subunit provides nucleotide specificity of the enzyme and binds the substrate succinate, while the binding sites for coenzyme A and phosphate are found in the alpha subunit. This is Succinate--CoA ligase [ADP-forming] subunit beta from Ignicoccus hospitalis (strain KIN4/I / DSM 18386 / JCM 14125).